Reading from the N-terminus, the 1176-residue chain is Pesticidal crystal protein Cry1Aa (1176 aa).

It belongs to the delta endotoxin family.

Its function is as follows. Promotes colloidosmotic lysis by binding to the midgut epithelial cells of many lepidopteran larvae. The polypeptide is Pesticidal crystal protein Cry1Aa (cry1Aa) (Bacillus thuringiensis subsp. aizawai).